The chain runs to 340 residues: GTP 3',8-cyclase (340 aa).

The Radical SAM core domain occupies 20–246; the sequence is RFERQYVYLR…PKALSDGPAK (227 aa). R29 is a GTP binding site. [4Fe-4S] cluster contacts are provided by C36 and C40. Y42 is an S-adenosyl-L-methionine binding site. C43 is a binding site for [4Fe-4S] cluster. Residue R79 participates in GTP binding. Residue G83 coordinates S-adenosyl-L-methionine. Residue T110 coordinates GTP. S134 provides a ligand contact to S-adenosyl-L-methionine. Position 171 (K171) interacts with GTP. M205 provides a ligand contact to S-adenosyl-L-methionine. The [4Fe-4S] cluster site is built by C268 and C271. A GTP-binding site is contributed by 273 to 275; the sequence is RLR. C285 contacts [4Fe-4S] cluster.

The protein belongs to the radical SAM superfamily. MoaA family. As to quaternary structure, monomer and homodimer. [4Fe-4S] cluster serves as cofactor.

The catalysed reaction is GTP + AH2 + S-adenosyl-L-methionine = (8S)-3',8-cyclo-7,8-dihydroguanosine 5'-triphosphate + 5'-deoxyadenosine + L-methionine + A + H(+). The protein operates within cofactor biosynthesis; molybdopterin biosynthesis. Catalyzes the cyclization of GTP to (8S)-3',8-cyclo-7,8-dihydroguanosine 5'-triphosphate. The sequence is that of GTP 3',8-cyclase from Actinobacillus pleuropneumoniae serotype 7 (strain AP76).